We begin with the raw amino-acid sequence, 537 residues long: Bifunctional purine biosynthesis protein PurH (537 aa).

Positions 8 to 158 constitute an MGS-like domain; that stretch reads IPAPDLVPVR…KNHAYVAVVT (151 aa).

Belongs to the PurH family.

It catalyses the reaction (6R)-10-formyltetrahydrofolate + 5-amino-1-(5-phospho-beta-D-ribosyl)imidazole-4-carboxamide = 5-formamido-1-(5-phospho-D-ribosyl)imidazole-4-carboxamide + (6S)-5,6,7,8-tetrahydrofolate. The catalysed reaction is IMP + H2O = 5-formamido-1-(5-phospho-D-ribosyl)imidazole-4-carboxamide. Its pathway is purine metabolism; IMP biosynthesis via de novo pathway; 5-formamido-1-(5-phospho-D-ribosyl)imidazole-4-carboxamide from 5-amino-1-(5-phospho-D-ribosyl)imidazole-4-carboxamide (10-formyl THF route): step 1/1. It functions in the pathway purine metabolism; IMP biosynthesis via de novo pathway; IMP from 5-formamido-1-(5-phospho-D-ribosyl)imidazole-4-carboxamide: step 1/1. This is Bifunctional purine biosynthesis protein PurH from Chelativorans sp. (strain BNC1).